Reading from the N-terminus, the 894-residue chain is B-cell lymphoma/leukemia 11B (894 aa).

Ser-97 and Ser-110 each carry phosphoserine. Thr-120 is subject to Phosphothreonine. Residue Ser-129 is modified to Phosphoserine. Lys-137 participates in a covalent cross-link: Glycyl lysine isopeptide (Lys-Gly) (interchain with G-Cter in SUMO2). Residues 221-251 (YICTTCKQPFNSAWFLLQHAQNTHGFRIYLE) form a C2H2-type 1 zinc finger. Ser-256 bears the Phosphoserine mark. Thr-260 bears the Phosphothreonine mark. Residue Ser-277 is modified to Phosphoserine. Omega-N-methylarginine is present on Arg-293. Arg-322 is subject to Asymmetric dimethylarginine. Ser-358 is subject to Phosphoserine. 2 disordered regions span residues 370–428 (LAGN…KSKS) and 471–583 (KRHM…GGGA). Residue Thr-376 is modified to Phosphothreonine. A phosphoserine mark is found at Ser-381, Ser-398, and Ser-401. A compositionally biased stretch (pro residues) spans 396–423 (QPSPKSPFLSTPPLPPMPPGGTPPPQPP). Phosphothreonine occurs at positions 406 and 417. C2H2-type zinc fingers lie at residues 427 to 454 (KSCEFCGKTFKFQSNLIVHRRSHTGEKP) and 455 to 482 (YKCQLCDHACSQASKLKRHMKTHMHKAG). Over residues 471–480 (KRHMKTHMHK) the composition is skewed to basic residues. Residues Ser-483, Ser-488, Ser-496, and Ser-497 each carry the phosphoserine modification. The span at 511–529 (KAADGDFRHHESDPSLGHE) shows a compositional bias: basic and acidic residues. Positions 530–546 (PEEEDEEEEEEEEELLL) are enriched in acidic residues. Residues 568 to 583 (NGGGGVPGVPGAGGGA) are compositionally biased toward gly residues. Residues Lys-591 and Lys-617 each participate in a glycyl lysine isopeptide (Lys-Gly) (interchain with G-Cter in SUMO2) cross-link. Residues 653-680 (GRGGGFAPGTEPFPGLFPRKPAPLPSPG) are disordered. Ser-678 is modified (phosphoserine). Glycyl lysine isopeptide (Lys-Gly) (interchain with G-Cter in SUMO2) cross-links involve residues Lys-686 and Lys-723. Residues 737–752 (FATSSEHSSENGSLRF) are compositionally biased toward polar residues. Residues 737–794 (FATSSEHSSENGSLRFSTPPGDLLDGGLSGRSGTASGGSTPHLGGPGPGRPSSKEGRR) form a disordered region. The span at 753 to 775 (STPPGDLLDGGLSGRSGTASGGS) shows a compositional bias: low complexity. Phosphothreonine is present on Thr-754. 2 positions are modified to phosphoserine: Ser-765 and Ser-772. C2H2-type zinc fingers lie at residues 796 to 823 (DTCEYCGKVFKNCSNLTVHRRSHTGERP), 824 to 853 (YKCELCNYACAQSSKLTRHMKTHGQIGKEV), and 854 to 884 (YRCDICQMPFSVYSTLEKHMKKWHGEHLLTN). Lys-851 is modified (N6-acetyllysine). Residue Lys-887 forms a Glycyl lysine isopeptide (Lys-Gly) (interchain with G-Cter in SUMO2) linkage.

As to quaternary structure, interacts with TFCOUP1, SIRT1, ARP1 and EAR2. Interacts with EP300; the interaction is detected in activated T-lymphocytes, but not under resting conditions. Post-translationally, sumoylated with SUMO1. In terms of tissue distribution, highly expressed in brain and in malignant T-cell lines derived from patients with adult T-cell leukemia/lymphoma.

It localises to the nucleus. Functionally, key regulator of both differentiation and survival of T-lymphocytes during thymocyte development in mammals. Essential in controlling the responsiveness of hematopoietic stem cells to chemotactic signals by modulating the expression of the receptors CCR7 and CCR9, which direct the movement of progenitor cells from the bone marrow to the thymus. Is a regulator of IL2 promoter and enhances IL2 expression in activated CD4(+) T-lymphocytes. Tumor-suppressor that represses transcription through direct, TFCOUP2-independent binding to a GC-rich response element. May also function in the P53-signaling pathway. The chain is B-cell lymphoma/leukemia 11B (BCL11B) from Homo sapiens (Human).